Here is a 221-residue protein sequence, read N- to C-terminus: Orotidine 5'-phosphate decarboxylase (221 aa).

Substrate-binding positions include Asp-12, Lys-34, 60 to 69 (DFKVADIPNT), Ser-117, 170 to 180 (PGVGAQGGKAS), Gly-193, and Arg-194. Lys-62 functions as the Proton donor in the catalytic mechanism.

Belongs to the OMP decarboxylase family. Type 1 subfamily. Homodimer.

The catalysed reaction is orotidine 5'-phosphate + H(+) = UMP + CO2. The protein operates within pyrimidine metabolism; UMP biosynthesis via de novo pathway; UMP from orotate: step 2/2. Its function is as follows. Catalyzes the decarboxylation of orotidine 5'-monophosphate (OMP) to uridine 5'-monophosphate (UMP). This Methanosarcina barkeri (strain Fusaro / DSM 804) protein is Orotidine 5'-phosphate decarboxylase.